The chain runs to 611 residues: Zinc metalloproteinase nas-31 (611 aa).

The N-terminal stretch at M1–S17 is a signal peptide. Residues Q18 to R158 constitute a propeptide that is removed on maturation. N-linked (GlcNAc...) asparagine glycosylation is found at N53 and N67. The span at N82–Q95 shows a compositional bias: polar residues. A disordered region spans residues N82–R103. The region spanning Q159 to K354 is the Peptidase M12A domain. A glycan (N-linked (GlcNAc...) asparagine) is linked at N200. Intrachain disulfides connect C203-C353, C224-C243, C357-C376, C379-C390, C397-C428, C455-C476, C532-C564, C539-C557, and C548-C561. H251 provides a ligand contact to Zn(2+). E252 is an active-site residue. Residues H255 and H261 each contribute to the Zn(2+) site. One can recognise an EGF-like domain in the interval G340 to G396. The 120-residue stretch at C397–V516 folds into the CUB domain. The N-linked (GlcNAc...) asparagine glycan is linked to N424. One can recognise a ShKT domain in the interval C532–C564.

Requires Zn(2+) as cofactor. As to expression, expressed in excretory cell and in amphid and phasmid sheath glia.

The protein resides in the secreted. In terms of biological role, metalloprotease. This is Zinc metalloproteinase nas-31 (nas-31) from Caenorhabditis elegans.